The sequence spans 447 residues: Chromosomal replication initiator protein DnaA (447 aa).

The segment at 1 to 79 (MVSCENLWQQ…TGQEITVKLI (79 aa)) is domain I, interacts with DnaA modulators. Residues 79–105 (ITDGLEPHSLIGQESSLPMETTPKNAT) form a domain II region. The segment at 106–322 (ALNGKYTFSR…GALIRAIAYT (217 aa)) is domain III, AAA+ region. ATP-binding residues include Gly150, Gly152, Lys153, and Thr154. Residues 323–447 (SLSNVAMTVE…INIAGQAPES (125 aa)) form a domain IV, binds dsDNA region.

The protein belongs to the DnaA family. As to quaternary structure, oligomerizes as a right-handed, spiral filament on DNA at oriC.

The protein localises to the cytoplasm. Plays an essential role in the initiation and regulation of chromosomal replication. ATP-DnaA binds to the origin of replication (oriC) to initiate formation of the DNA replication initiation complex once per cell cycle. Binds the DnaA box (a 9 base pair repeat at the origin) and separates the double-stranded (ds)DNA. Forms a right-handed helical filament on oriC DNA; dsDNA binds to the exterior of the filament while single-stranded (ss)DNA is stabiized in the filament's interior. The ATP-DnaA-oriC complex binds and stabilizes one strand of the AT-rich DNA unwinding element (DUE), permitting loading of DNA polymerase. After initiation quickly degrades to an ADP-DnaA complex that is not apt for DNA replication. Binds acidic phospholipids. Functionally, isolated domain IV (residues 348-447) binds both E.coli and B.subtilis oriC. This Synechocystis sp. (strain ATCC 27184 / PCC 6803 / Kazusa) protein is Chromosomal replication initiator protein DnaA.